Here is a 122-residue protein sequence, read N- to C-terminus: uncharacterized protein (122 aa).

Positions 1 to 17 are cleaved as a signal peptide; sequence MKYSSIFSMLSFFILFA.

This is an uncharacterized protein from Escherichia coli (strain K12).